Here is a 91-residue protein sequence, read N- to C-terminus: Probable Fe(2+)-trafficking protein (91 aa).

Belongs to the Fe(2+)-trafficking protein family. As to quaternary structure, monomer.

Could be a mediator in iron transactions between iron acquisition and iron-requiring processes, such as synthesis and/or repair of Fe-S clusters in biosynthetic enzymes. In Cronobacter sakazakii (strain ATCC BAA-894) (Enterobacter sakazakii), this protein is Probable Fe(2+)-trafficking protein.